Here is a 138-residue protein sequence, read N- to C-terminus: MAKPIPRIGSRRNGRISSRKSTRRIPKGVIHVQASFNNTIVTVTDVRGRVISWSSAGTCGFKGTRRGTPFAAQTAAGNAIRGVVDQGMQRAEVMIKGPGLGRDAALRAIRRSGILLSFIRDVTPMPHNGCRPPKKRRV.

The interval 1–23 (MAKPIPRIGSRRNGRISSRKSTR) is disordered. The span at 9-23 (GSRRNGRISSRKSTR) shows a compositional bias: basic residues.

Belongs to the universal ribosomal protein uS11 family. As to quaternary structure, part of the 30S ribosomal subunit.

It is found in the plastid. The protein localises to the chloroplast. This is Small ribosomal subunit protein uS11c from Cucumis sativus (Cucumber).